Reading from the N-terminus, the 577-residue chain is Outer spore wall assembly protein SHE10 (577 aa).

The first 23 residues, 1–23 (MGKLIKLITTLTVLVSLLQYCCE), serve as a signal peptide directing secretion. Coiled-coil stretches lie at residues 379–416 (NETR…ENVE) and 513–561 (ILRS…EEDV). Residues 525–545 (RERKERERKEREKAAAEEFQR) show a composition bias toward basic and acidic residues. The tract at residues 525-577 (RERKERERKEREKAAAEEFQRQQELLLQQEEEDEEDVSYTSTSTITTTTTMTL) is disordered. Residues 562–577 (SYTSTSTITTTTTMTL) are compositionally biased toward low complexity.

This sequence belongs to the SHE10 family. In terms of assembly, component of the mitochondria-localized RNase mitochondrial RNA-processing (RNase MRP) composed of one single RNA encoded by the NME1 gene and at least 31 proteins. Absent in the nucleus-localized RNase MRP (NuMRP).

It is found in the mitochondrion. In terms of biological role, involved in spore wall assembly. May be a component of the mitochondrial RNase MRP (MtMRP), a ribonucleoprotein endoribonuclease involved in the cleaving RNA transcripts to generate primers for DNA replication in mitochondria. This is Outer spore wall assembly protein SHE10 from Saccharomyces cerevisiae (strain RM11-1a) (Baker's yeast).